The primary structure comprises 352 residues: UDP-N-acetylglucosamine--N-acetylmuramyl-(pentapeptide) pyrophosphoryl-undecaprenol N-acetylglucosamine transferase 2 (352 aa).

UDP-N-acetyl-alpha-D-glucosamine contacts are provided by residues 11-13 (SAG), R164, S194, and Q289.

The protein belongs to the glycosyltransferase 28 family. MurG subfamily.

It is found in the cell membrane. It catalyses the reaction di-trans,octa-cis-undecaprenyl diphospho-N-acetyl-alpha-D-muramoyl-L-alanyl-D-glutamyl-meso-2,6-diaminopimeloyl-D-alanyl-D-alanine + UDP-N-acetyl-alpha-D-glucosamine = di-trans,octa-cis-undecaprenyl diphospho-[N-acetyl-alpha-D-glucosaminyl-(1-&gt;4)]-N-acetyl-alpha-D-muramoyl-L-alanyl-D-glutamyl-meso-2,6-diaminopimeloyl-D-alanyl-D-alanine + UDP + H(+). Its pathway is cell wall biogenesis; peptidoglycan biosynthesis. In terms of biological role, cell wall formation. Catalyzes the transfer of a GlcNAc subunit on undecaprenyl-pyrophosphoryl-MurNAc-pentapeptide (lipid intermediate I) to form undecaprenyl-pyrophosphoryl-MurNAc-(pentapeptide)GlcNAc (lipid intermediate II). The sequence is that of UDP-N-acetylglucosamine--N-acetylmuramyl-(pentapeptide) pyrophosphoryl-undecaprenol N-acetylglucosamine transferase 2 from Bacillus anthracis.